Here is a 303-residue protein sequence, read N- to C-terminus: MAASLSSEVHSLGQLLIDPGKPLPLRFRALFTLRNLGGAEAIDCIGRGFQDESALLKHELAYCLGQMKDRRALPVLKQVLQDRQQEPMVRHEAGEALGAIGDPEVLELLREYAQDPVIEVAETCQLAVSRIEWLQKNPDSPDTNPYLSVDPAPPAEEKDVPTLRATLLDETCPLFHRYRAMFALRNIGGEEAVLALADGLQIGGSLFRHEIGYVLGQMQHKAAVPGLSAALERFEENPMVRHECAEALGSIAHEDCLKALRAHVGDGERVVRESCEVALDMHDYENSGDFQYANGLSQICEQI.

HEAT-like PBS-type repeat units follow at residues 56 to 82 (LKHE…VLQD) and 89 to 115 (VRHE…YAQD). 3 residues coordinate Fe cation: His-58, His-91, and Glu-92. The tract at residues 139–158 (DSPDTNPYLSVDPAPPAEEK) is disordered. HEAT-like PBS-type repeat units lie at residues 176–202 (HRYR…GLQI), 207–233 (FRHE…ALER), and 240–266 (VRHE…HVGD). Fe cation-binding residues include His-209, His-242, and Glu-243.

Belongs to the deoxyhypusine hydroxylase family. Fe(2+) serves as cofactor.

It catalyses the reaction [eIF5A protein]-deoxyhypusine + AH2 + O2 = [eIF5A protein]-hypusine + A + H2O. The protein operates within protein modification; eIF5A hypusination. Functionally, catalyzes the hydroxylation of the N(6)-(4-aminobutyl)-L-lysine intermediate produced by deoxyhypusine synthase/DHPS on a critical lysine of the eukaryotic translation initiation factor 5A/eIF-5A. This is the second step of the post-translational modification of that lysine into an unusual amino acid residue named hypusine. Hypusination is unique to mature eIF-5A factor and is essential for its function. This chain is Deoxyhypusine hydroxylase (dohh), found in Xenopus laevis (African clawed frog).